Reading from the N-terminus, the 319-residue chain is ATP-dependent 6-phosphofructokinase (319 aa).

Position 11 (G11) interacts with ATP. 21-25 (RAVVR) contributes to the ADP binding site. ATP is bound by residues 72-73 (RY) and 102-105 (GDGS). Position 103 (D103) interacts with Mg(2+). 125–127 (TID) contributes to the substrate binding site. D127 serves as the catalytic Proton acceptor. ADP is bound at residue R154. Substrate-binding positions include R162 and 169 to 171 (MGR). Residues 185 to 187 (GAE), R211, and 213 to 215 (KKH) each bind ADP. Substrate-binding positions include E222, R243, and 249–252 (HVQR).

It belongs to the phosphofructokinase type A (PFKA) family. ATP-dependent PFK group I subfamily. Prokaryotic clade 'B1' sub-subfamily. As to quaternary structure, homotetramer. It depends on Mg(2+) as a cofactor.

It localises to the cytoplasm. The catalysed reaction is beta-D-fructose 6-phosphate + ATP = beta-D-fructose 1,6-bisphosphate + ADP + H(+). It functions in the pathway carbohydrate degradation; glycolysis; D-glyceraldehyde 3-phosphate and glycerone phosphate from D-glucose: step 3/4. Allosterically activated by ADP and other diphosphonucleosides, and allosterically inhibited by phosphoenolpyruvate. Functionally, catalyzes the phosphorylation of D-fructose 6-phosphate to fructose 1,6-bisphosphate by ATP, the first committing step of glycolysis. This is ATP-dependent 6-phosphofructokinase from Listeria monocytogenes serotype 4b (strain CLIP80459).